A 174-amino-acid polypeptide reads, in one-letter code: uncharacterized protein (174 aa).

An N-acetyltransferase domain is found at 42–174; that stretch reads SNTKNINLYE…GVKGMFWYPR (133 aa).

Belongs to the acetyltransferase family. Ycf52 subfamily.

It is found in the plastid. The protein resides in the chloroplast. This is an uncharacterized protein from Porphyra purpurea (Red seaweed).